A 513-amino-acid polypeptide reads, in one-letter code: Nuclear pore complex protein NUP58 (513 aa).

3 disordered regions span residues 28–62 (QTNS…QPQQ), 217–239 (SVGS…GQQQ), and 356–513 (RETA…TTRR). Positions 30 to 50 (NSIFSQSQPQQTNSIFSQSQP) are enriched in polar residues. Composition is skewed to low complexity over residues 51–62 (QQTNSIFSQPQQ) and 217–227 (SVGSQPSQGQG). Residues 356–365 (RETAKQEAAA) show a composition bias toward basic and acidic residues. Positions 377–386 (STTSTQPSTQ) are enriched in low complexity. Residues 393-427 (SSATPGGSNPPQTSVPTSNPSSGAGFSFLNTPASG) are compositionally biased toward polar residues. A compositionally biased stretch (low complexity) spans 428-446 (PSSSLFATPSSTAPTSSLF). 6 repeat units span residues 446-447 (FG), 458-459 (FG), 466-467 (FG), 473-474 (FG), 486-487 (FG), and 497-498 (FG). Residues 446-498 (FGPSPTPTQTPLFGSSPASTFGSTQSLFGQTTPSLTMPSQFGGATPGSGASFG) form a 6 X 2 AA repeats of F-G region. Polar residues predominate over residues 452 to 484 (PTQTPLFGSSPASTFGSTQSLFGQTTPSLTMPS). Positions 504-513 (SRPKSRTTRR) are enriched in basic residues.

It belongs to the NUP58 family. As to quaternary structure, part of the nuclear pore complex (NPC). The NPC has an eight-fold symmetrical structure comprising a central transport channel and two rings, the cytoplasmic and nuclear rings, to which eight filaments are attached. The cytoplasmic filaments have loose ends, while the nuclear filaments are joined in a distal ring, forming a nuclear basket. NPCs are highly dynamic in configuration and composition, and can be devided in 3 subcomplexes, the NUP62 subcomplex, the NUP107-160 subcomplex and the NUP93 subcomplex, containing approximately 30 different nucleoporin proteins. Interacts with GAI, NUP62, SKP1A and SKP1B. As to expression, ubiquitous. Higherst expression in cauline leaves, lowest in roots.

It is found in the nucleus envelope. Its subcellular location is the nucleus. The protein localises to the nuclear pore complex. Its function is as follows. Involved in nucleocytoplasmic trafficking. May have regulatory roles in the gibberellin pathway, in auxin signaling and in light perception. The chain is Nuclear pore complex protein NUP58 from Arabidopsis thaliana (Mouse-ear cress).